A 314-amino-acid chain; its full sequence is Olfactory receptor 4K2 (314 aa).

Residues 1 to 25 are Extracellular-facing; the sequence is MDVGNKSTMSEFVLLGLSNSWELQM. N-linked (GlcNAc...) asparagine glycosylation is present at Asn-5. A helical transmembrane segment spans residues 26 to 49; sequence FFFMVFSLLYVATMVGNSLIVITV. At 50–57 the chain is on the cytoplasmic side; sequence IVDPHLHS. Residues 58–79 traverse the membrane as a helical segment; it reads PMYFLLTNLSIIDMSLASFATP. The Extracellular segment spans residues 80-100; the sequence is KMITDYLTGHKTISFDGCLTQ. A disulfide bond links Cys-97 and Cys-189. The chain crosses the membrane as a helical span at residues 101 to 120; sequence IFFLHLFTGTEIILLMAMSF. Topologically, residues 121 to 139 are cytoplasmic; it reads DRYIAICKPLHYASVISPQ. A helical transmembrane segment spans residues 140-158; sequence VCVALVVASWIMGVMHSMS. Topologically, residues 159–195 are extracellular; the sequence is QVIFALTLPFCGPYEVDSFFCDLPVVFQLACVDTYVL. Residues 196 to 219 traverse the membrane as a helical segment; that stretch reads GLFMISTSGIIALSCFIVLFNSYV. The Cytoplasmic segment spans residues 220–235; sequence IVLVTVKHHSSRGSSK. Residues 236-258 form a helical membrane-spanning segment; that stretch reads ALSTCTAHFIVVFLFFGPCIFIY. The Extracellular segment spans residues 259 to 269; it reads MWPLSSFLTDK. A helical membrane pass occupies residues 270–289; that stretch reads ILSVFYTIFTPTLNPIIYTL. The Cytoplasmic segment spans residues 290-314; that stretch reads RNQEVKIAMRKLKNRFLNFNKAMPS.

Belongs to the G-protein coupled receptor 1 family.

The protein localises to the cell membrane. Functionally, odorant receptor. The sequence is that of Olfactory receptor 4K2 (OR4K2) from Homo sapiens (Human).